A 357-amino-acid chain; its full sequence is MTKENICIVFGGKSAEHDVSILTAQNVLNAIDKERYQVDIIYITNDGEWKKKDNITQEIKNTDELVINDVETGEISQLLSKGSLGKSYDAVFPLLHGPNGEDGTIQGLFEVLDIPYVGNGVLAASSSMDKLVMKQLFEHRGLPQLPYISFLRSEYEKYENNIIKLVNDKLTYPVFVKPANLGSSVGISKCNNEEELKSGITEAFQFDRKLVIEQGINAREIEVAVLGNDYPETTWPGEVVKDVAFYDYKSKYKDGKIRLDIPADLDQDVQMTLRNMALEAFKATDCSGLVRADFFVTDDNQIYINETNAMPGFTAYSMYPNLWKNMGLSYPDLIAKLIDLAKERYEDKKKNKYKIDY.

The ATP-grasp domain maps to 134–339; sequence KQLFEHRGLP…YPDLIAKLID (206 aa). 167–222 is a binding site for ATP; the sequence is NDKLTYPVFVKPANLGSSVGISKCNNEEELKSGITEAFQFDRKLVIEQGINAREIE. The Mg(2+) site is built by Asp-293, Glu-306, and Asn-308.

The protein belongs to the D-alanine--D-alanine ligase family. Mg(2+) is required as a cofactor. It depends on Mn(2+) as a cofactor.

The protein resides in the cytoplasm. It carries out the reaction 2 D-alanine + ATP = D-alanyl-D-alanine + ADP + phosphate + H(+). Its pathway is cell wall biogenesis; peptidoglycan biosynthesis. Functionally, cell wall formation. The sequence is that of D-alanine--D-alanine ligase from Staphylococcus epidermidis (strain ATCC 12228 / FDA PCI 1200).